The sequence spans 366 residues: sn-glycerol-3-phosphate import ATP-binding protein UgpC (366 aa).

Positions 4–235 (VTLRNVRKTY…PASTFVASFI (232 aa)) constitute an ABC transporter domain. 37 to 44 (GPSGCGKS) provides a ligand contact to ATP.

It belongs to the ABC transporter superfamily. sn-glycerol-3-phosphate importer (TC 3.A.1.1.3) family. As to quaternary structure, the complex is composed of two ATP-binding proteins (UgpC), two transmembrane proteins (UgpA and UgpE) and a solute-binding protein (UgpB).

The protein resides in the cell inner membrane. It catalyses the reaction sn-glycerol 3-phosphate(out) + ATP + H2O = sn-glycerol 3-phosphate(in) + ADP + phosphate + H(+). Part of the ABC transporter complex UgpBAEC involved in sn-glycerol-3-phosphate (G3P) import. Responsible for energy coupling to the transport system. The sequence is that of sn-glycerol-3-phosphate import ATP-binding protein UgpC from Rhodopseudomonas palustris (strain BisB18).